The primary structure comprises 292 residues: Ribosomal protein L11 methyltransferase (292 aa).

S-adenosyl-L-methionine is bound by residues Thr143, Gly164, Asp186, and Asn228.

This sequence belongs to the methyltransferase superfamily. PrmA family.

It is found in the cytoplasm. The catalysed reaction is L-lysyl-[protein] + 3 S-adenosyl-L-methionine = N(6),N(6),N(6)-trimethyl-L-lysyl-[protein] + 3 S-adenosyl-L-homocysteine + 3 H(+). Methylates ribosomal protein L11. The chain is Ribosomal protein L11 methyltransferase from Aeromonas salmonicida (strain A449).